Reading from the N-terminus, the 657-residue chain is UvrABC system protein B (657 aa).

A Helicase ATP-binding domain is found at 25-182; that stretch reads KSIKQGNEFQ…KKLIEIQYER (158 aa). 38–45 serves as a coordination point for ATP; the sequence is GVTGSGKT. The Beta-hairpin motif lies at 91-114; that stretch reads YYDYYQPEAYVPQTDTFIEKDASI. One can recognise a Helicase C-terminal domain in the interval 429-595; sequence QIDDLYTEIQ…TINKEVRELI (167 aa). The UVR domain occupies 621 to 656; the sequence is KKLIKEYTDEMKLAAKNLQFERAAQLRDKIEELKGK.

It belongs to the UvrB family. In terms of assembly, forms a heterotetramer with UvrA during the search for lesions. Interacts with UvrC in an incision complex.

It localises to the cytoplasm. The UvrABC repair system catalyzes the recognition and processing of DNA lesions. A damage recognition complex composed of 2 UvrA and 2 UvrB subunits scans DNA for abnormalities. Upon binding of the UvrA(2)B(2) complex to a putative damaged site, the DNA wraps around one UvrB monomer. DNA wrap is dependent on ATP binding by UvrB and probably causes local melting of the DNA helix, facilitating insertion of UvrB beta-hairpin between the DNA strands. Then UvrB probes one DNA strand for the presence of a lesion. If a lesion is found the UvrA subunits dissociate and the UvrB-DNA preincision complex is formed. This complex is subsequently bound by UvrC and the second UvrB is released. If no lesion is found, the DNA wraps around the other UvrB subunit that will check the other stand for damage. This is UvrABC system protein B from Clostridium botulinum (strain Eklund 17B / Type B).